Reading from the N-terminus, the 98-residue chain is NADH-ubiquinone oxidoreductase chain 4L (98 aa).

Helical transmembrane passes span 1 to 21, 29 to 49, and 61 to 81; these read MSLV…GLLM, ALLC…LTIL, and IILL…LIMI.

This sequence belongs to the complex I subunit 4L family. In terms of assembly, core subunit of respiratory chain NADH dehydrogenase (Complex I) which is composed of 45 different subunits.

It is found in the mitochondrion inner membrane. The enzyme catalyses a ubiquinone + NADH + 5 H(+)(in) = a ubiquinol + NAD(+) + 4 H(+)(out). Functionally, core subunit of the mitochondrial membrane respiratory chain NADH dehydrogenase (Complex I) which catalyzes electron transfer from NADH through the respiratory chain, using ubiquinone as an electron acceptor. Part of the enzyme membrane arm which is embedded in the lipid bilayer and involved in proton translocation. The chain is NADH-ubiquinone oxidoreductase chain 4L (MT-ND4L) from Monodon monoceros (Narwhal).